The following is a 221-amino-acid chain: MDSNVITSLTFKTSKGRTSPKFGYGTSDSVEFVLESKGCAIVGFYGWYKTGSGYTTALGAYYYPMPLPPSSEKLEAQGGAGGAPWDDGSNFEGVRKIYIGTGEIGIVSIKFLYENDIHEIIVGDHHGNKNLLRHEEFDLDYPSEYLTSVEGSYDVVPGSEEDEVMIMLKFTTNMRTSPCYGLDDDPSFVLHKEGHKIVGFHGKSSTMLHKLGIHVLPITHS.

Jacalin-type lectin domains follow at residues M1 to P64 and S71 to P217.

This sequence belongs to the jacalin lectin family.

The protein is Jacalin-related lectin 47 (JAL47) of Arabidopsis thaliana (Mouse-ear cress).